The sequence spans 326 residues: Ribose-phosphate pyrophosphokinase (326 aa).

Residues 45–47 (NGE) and 104–105 (RQ) contribute to the ATP site. 2 residues coordinate Mg(2+): histidine 138 and aspartate 178. Lysine 202 is an active-site residue. D-ribose 5-phosphate contacts are provided by residues arginine 204, aspartate 230, and 234–238 (DTGGT).

Belongs to the ribose-phosphate pyrophosphokinase family. Class I subfamily. In terms of assembly, homohexamer. Requires Mg(2+) as cofactor.

It localises to the cytoplasm. It carries out the reaction D-ribose 5-phosphate + ATP = 5-phospho-alpha-D-ribose 1-diphosphate + AMP + H(+). It participates in metabolic intermediate biosynthesis; 5-phospho-alpha-D-ribose 1-diphosphate biosynthesis; 5-phospho-alpha-D-ribose 1-diphosphate from D-ribose 5-phosphate (route I): step 1/1. In terms of biological role, involved in the biosynthesis of the central metabolite phospho-alpha-D-ribosyl-1-pyrophosphate (PRPP) via the transfer of pyrophosphoryl group from ATP to 1-hydroxyl of ribose-5-phosphate (Rib-5-P). This chain is Ribose-phosphate pyrophosphokinase, found in Mycobacterium bovis (strain ATCC BAA-935 / AF2122/97).